Consider the following 303-residue polypeptide: UDP-3-O-acyl-N-acetylglucosamine deacetylase (303 aa).

Positions 78, 237, and 241 each coordinate Zn(2+). Residue His264 is the Proton donor of the active site.

This sequence belongs to the LpxC family. Zn(2+) is required as a cofactor.

It carries out the reaction a UDP-3-O-[(3R)-3-hydroxyacyl]-N-acetyl-alpha-D-glucosamine + H2O = a UDP-3-O-[(3R)-3-hydroxyacyl]-alpha-D-glucosamine + acetate. It participates in glycolipid biosynthesis; lipid IV(A) biosynthesis; lipid IV(A) from (3R)-3-hydroxytetradecanoyl-[acyl-carrier-protein] and UDP-N-acetyl-alpha-D-glucosamine: step 2/6. Functionally, catalyzes the hydrolysis of UDP-3-O-myristoyl-N-acetylglucosamine to form UDP-3-O-myristoylglucosamine and acetate, the committed step in lipid A biosynthesis. This chain is UDP-3-O-acyl-N-acetylglucosamine deacetylase, found in Pseudomonas putida (strain ATCC 700007 / DSM 6899 / JCM 31910 / BCRC 17059 / LMG 24140 / F1).